An 893-amino-acid chain; its full sequence is DNA mismatch repair protein MutS (893 aa).

Residues 1–17 (MESTMSSASTNASPPSA) are compositionally biased toward low complexity. The tract at residues 1–22 (MESTMSSASTNASPPSASEKHT) is disordered. ATP is bound at residue 641–648 (GPNMGGKS).

This sequence belongs to the DNA mismatch repair MutS family.

Functionally, this protein is involved in the repair of mismatches in DNA. It is possible that it carries out the mismatch recognition step. This protein has a weak ATPase activity. The polypeptide is DNA mismatch repair protein MutS (Herminiimonas arsenicoxydans).